A 292-amino-acid chain; its full sequence is GTP cyclohydrolase FolE2 (292 aa).

The protein belongs to the GTP cyclohydrolase IV family.

The enzyme catalyses GTP + H2O = 7,8-dihydroneopterin 3'-triphosphate + formate + H(+). Its pathway is cofactor biosynthesis; 7,8-dihydroneopterin triphosphate biosynthesis; 7,8-dihydroneopterin triphosphate from GTP: step 1/1. Its function is as follows. Converts GTP to 7,8-dihydroneopterin triphosphate. This chain is GTP cyclohydrolase FolE2, found in Staphylococcus aureus (strain Mu50 / ATCC 700699).